We begin with the raw amino-acid sequence, 275 residues long: Large ribosomal subunit protein uL2c (275 aa).

Disordered stretches follow at residues 1–28 (MGIR…TKSK) and 227–251 (PCDH…TPWG). Residues 10-22 (TPGTRNRSSSDFS) show a composition bias toward polar residues.

Belongs to the universal ribosomal protein uL2 family. As to quaternary structure, part of the 50S ribosomal subunit.

Its subcellular location is the plastid. It localises to the chloroplast. This chain is Large ribosomal subunit protein uL2c (rpl2), found in Rhodomonas salina (Cryptomonas salina).